The sequence spans 860 residues: Ras GTPase-activating-like protein gapA (860 aa).

A compositionally biased stretch (acidic residues) spans 1–20 (MEGLEIEDEDVILLDEDDDS). Residues 1 to 48 (MEGLEIEDEDVILLDEDDDSSSSSTVNNSSSNIKNNGNTNNNIGNDDS) are disordered. Residues 21–46 (SSSSTVNNSSSNIKNNGNTNNNIGND) show a composition bias toward low complexity. Residues 146-185 (AEIQELKRNMVAEIRRNHLLERDVNKLDKRIALLIKHRSN) are a coiled coil. The region spanning 269–515 (FLILSLFRLA…SIVRQYLEDL (247 aa)) is the Ras-GAP domain. The stretch at 663–732 (NNPQLSSNAE…TIALRDLRKH (70 aa)) forms a coiled coil.

Heterotetramer. Quaternary complex with activated rac1A, ctxA and ctxB in the absence of rgaA.

Functionally, part of signaling pathway that is required for completion of cytokinesis. gapA and rgaA control cortexillin localization to the cleavage furrow and hence may be involved in cleavage of the midbody in the final stage of cytokinesis by regulating the actin cytoskeleton. Forms a complex by linking activated rac1A to ctxA in the absence of rgaA. Assembly of this complex is necessary for the recruitment of cortexillin to the midzone of the dividing cell. The sequence is that of Ras GTPase-activating-like protein gapA (gapA) from Dictyostelium discoideum (Social amoeba).